Reading from the N-terminus, the 103-residue chain is uncharacterized protein (103 aa).

This is an uncharacterized protein from Sinorhizobium fredii (strain NBRC 101917 / NGR234).